The primary structure comprises 152 residues: Transcriptional regulator MraZ (152 aa).

SpoVT-AbrB domains are found at residues 5–52 (ATLV…PLPE) and 81–124 (ASEC…DETT).

This sequence belongs to the MraZ family. In terms of assembly, forms oligomers.

Its subcellular location is the cytoplasm. The protein localises to the nucleoid. Functionally, negatively regulates its own expression and that of the subsequent genes in the proximal part of the division and cell wall (dcw) gene cluster. Acts by binding directly to DNA. May also regulate the expression of genes outside the dcw cluster. The protein is Transcriptional regulator MraZ of Escherichia coli O127:H6 (strain E2348/69 / EPEC).